The chain runs to 355 residues: Heterogeneous nuclear ribonucleoprotein D0 (355 aa).

The interval 1 to 92 (MSEEQFGGDG…SPRHSEAATA (92 aa)) is disordered. S2 carries the post-translational modification N-acetylserine. Low complexity-rich tracts occupy residues 11–20 (AAAAATAAVG) and 27–42 (EGAM…AAAG). Residues 43–58 (SGAGTGGGTASGGTEG) are compositionally biased toward gly residues. Residues 64 to 73 (EGAKIDASKN) show a composition bias toward basic and acidic residues. Position 71 is a phosphoserine (S71). K72 is covalently cross-linked (Glycyl lysine isopeptide (Lys-Gly) (interchain with G-Cter in SUMO2)). A phosphoserine mark is found at S80, S82, and S83. Phosphothreonine is present on T91. RRM domains follow at residues 97 to 179 (WKMF…KTKE) and 182 to 261 (KKIF…MSKE). The residue at position 119 (K119) is an N6-methyllysine. T127 carries the post-translational modification Phosphothreonine. A Glycyl lysine isopeptide (Lys-Gly) (interchain with G-Cter in SUMO2) cross-link involves residue K129. K165 bears the N6-acetyllysine mark. S190 is subject to Phosphoserine. A Phosphothreonine modification is found at T193. K197 participates in a covalent cross-link: Glycyl lysine isopeptide (Lys-Gly) (interchain with G-Cter in SUMO2). N6-acetyllysine is present on residues K243 and K251. Omega-N-methylarginine is present on Y263. At S271 the chain carries Phosphoserine. Omega-N-methylarginine is present on R272. G273 carries the N6-acetyllysine modification. 3 positions are modified to omega-N-methylarginine: R278, R280, and R282. At Q292 the chain carries N6-acetyllysine. R345 carries the asymmetric dimethylarginine; alternate modification. The residue at position 345 (R345) is a Dimethylated arginine; alternate. R345 is modified (omega-N-methylarginine; alternate).

In terms of assembly, identified in a IGF2BP1-dependent mRNP granule complex containing untranslated mRNAs. Part of a complex associated with the FOS mCRD domain and consisting of PABPC1, PAIP1, CSDE1/UNR and SYNCRIP. Interacts with IGF2BP2. Interacts with GTPBP1. Interacts with EIF4G1; the interaction requires RNA. Interacts with EIF3B and RPS3. Arg-345 is dimethylated, probably to asymmetric dimethylarginine. Post-translationally, methylated by PRMT1, in an insulin-dependent manner. The PRMT1-mediated methylation regulates tyrosine phosphorylation.

The protein resides in the nucleus. It localises to the cytoplasm. Its function is as follows. Binds with high affinity to RNA molecules that contain AU-rich elements (AREs) found within the 3'-UTR of many proto-oncogenes and cytokine mRNAs. Also binds to double- and single-stranded DNA sequences in a specific manner and functions a transcription factor. Each of the RNA-binding domains specifically can bind solely to a single-stranded non-monotonous 5'-UUAG-3' sequence and also weaker to the single-stranded 5'-TTAGGG-3' telomeric DNA repeat. Binds RNA oligonucleotides with 5'-UUAGGG-3' repeats more tightly than the telomeric single-stranded DNA 5'-TTAGGG-3' repeats. Binding of RRM1 to DNA inhibits the formation of DNA quadruplex structure which may play a role in telomere elongation. May be involved in translationally coupled mRNA turnover. Implicated with other RNA-binding proteins in the cytoplasmic deadenylation/translational and decay interplay of the FOS mRNA mediated by the major coding-region determinant of instability (mCRD) domain. May play a role in the regulation of the rhythmic expression of circadian clock core genes. Directly binds to the 3'UTR of CRY1 mRNA and induces CRY1 rhythmic translation. May also be involved in the regulation of PER2 translation. The polypeptide is Heterogeneous nuclear ribonucleoprotein D0 (HNRNPD) (Homo sapiens (Human)).